The following is a 498-amino-acid chain: Na(+)/H(+) exchange regulatory cofactor NHE-RF4 (498 aa).

PDZ domains are found at residues 49 to 130 (FCLL…LAQH), 157 to 235 (LCHV…AGLE), 263 to 346 (CLNI…VDPE), and 394 to 475 (QCFL…GARN). Residue S329 is modified to Phosphoserine.

As to quaternary structure, interacts with the C-terminal region of GUCY2C. Interacts with C-terminal region of SLC9A3 and the interactions decrease in response to elevated calcium ion levels. Interacts with the C-terminal region of SLC34A1. Interacts with USP2 isoform 2. Interacts (via the third PDZ domain) with SLC26A3 (via PDZ-binding motif). This interaction leads to decreased expression of SLC26A3 on the cell membrane resulting in its reduced exchanger activity. Phosphorylation at Ser-329 negatively regulates its interaction with SLC26A3. As to expression, expressed in kidney and small intestine. Not detected in heart, brain, spleen, lung, liver, skeletal muscle or testis.

The protein resides in the cell membrane. It localises to the cytoplasm. Its function is as follows. Acts as a regulatory protein that associates with GUCY2C and negatively modulates its heat-stable enterotoxin-mediated activation. Stimulates SLC9A3 activity in the presence of elevated calcium ions. The sequence is that of Na(+)/H(+) exchange regulatory cofactor NHE-RF4 (Nherf4) from Mus musculus (Mouse).